A 461-amino-acid polypeptide reads, in one-letter code: Ufm1-specific protease 2 (461 aa).

Active-site residues include Cys294, Asp418, and His420.

Belongs to the peptidase C78 family.

The protein localises to the endoplasmic reticulum. It localises to the cytoplasm. The protein resides in the nucleus. Thiol-dependent isopeptidase that specifically cleaves UFM1, a ubiquitin-like modifier protein, from conjugated proteins, such as CD274/PD-L1, CYB5R3, DDRGK1, MRE11, RPL26/uL24, TRIP4 and RPL26/uL24. While it is also able to mediate the processing of UFM1 precursors, a prerequisite for conjugation reactions, UFSP2 mainly acts as a protein deUFMylase that mediates deconjugation of UFM1 from target proteins. Mediates deUFMylation of RPL26/uL24, a critical step to release the UFM1 ribosome E3 ligase (UREL) complex during the recycling of 60S ribosome subunits from the endoplasmic reticulum. Catalyzes deUFMylation of TRIP4, regulating intracellular nuclear receptors transactivation and thereby regulate cell proliferation and differentiation. This Rattus norvegicus (Rat) protein is Ufm1-specific protease 2.